Here is a 756-residue protein sequence, read N- to C-terminus: Deoxynucleotidyltransferase terminal-interacting protein 2 (756 aa).

A disordered region spans residues 1–99 (MVVTRSARAK…AESNYSVSEH (99 aa)). Over residues 9–21 (AKASIQAASAESS) the composition is skewed to low complexity. Residue S21 is modified to Phosphoserine. Polar residues-rich tracts occupy residues 35-55 (PESS…TGKQ) and 80-96 (EPST…NYSV). At S117 the chain carries Phosphoserine. Position 129 is a phosphothreonine (T129). Residues S141, S145, S148, S184, and S194 each carry the phosphoserine modification. The interval 156 to 261 (PTEKTTGARR…LSEINKPNFY (106 aa)) is disordered. Positions 201–211 (RRTRSMQRKLK) are enriched in basic residues. Glycyl lysine isopeptide (Lys-Gly) (interchain with G-Cter in SUMO2) cross-links involve residues K217 and K220. T232 bears the Phosphothreonine mark. Phosphoserine is present on residues S239, S251, and S253. Residues 242–256 (RQTSHLQARSLSEIN) are compositionally biased toward polar residues. Glycyl lysine isopeptide (Lys-Gly) (interchain with G-Cter in SUMO2) cross-links involve residues K257, K316, and K321. 2 positions are modified to phosphoserine: S324 and S330. K345 participates in a covalent cross-link: Glycyl lysine isopeptide (Lys-Gly) (interchain with G-Cter in SUMO2). Position 381 is a phosphoserine (S381). A Glycyl lysine isopeptide (Lys-Gly) (interchain with G-Cter in SUMO2) cross-link involves residue K384. Phosphoserine is present on residues S434 and S512. Residues 505-542 (LEEEDKASEVAIEEEKEEEEDEKSEEDSSDHDENEDEF) are a coiled coil. A disordered region spans residues 510 to 547 (KASEVAIEEEKEEEEDEKSEEDSSDHDENEDEFSDEED). The tdBR region; mediates interaction with DNTT stretch occupies residues 548–605 (FLNSTKAKLLKLTSSSIDPGLSIKQLGGLYINFNADKLQSNKRTLTQIKEKKKNELLQ). K558 is covalently cross-linked (Glycyl lysine isopeptide (Lys-Gly) (interchain with G-Cter in SUMO2)). S569 is subject to Phosphoserine. Glycyl lysine isopeptide (Lys-Gly) (interchain with G-Cter in SUMO2) cross-links involve residues K584 and K606. T610 carries the phosphothreonine modification. Residues K626, K649, K658, K686, and K731 each participate in a glycyl lysine isopeptide (Lys-Gly) (interchain with G-Cter in SUMO2) cross-link.

As to quaternary structure, forms a ternary complex with DNTT and core histone; interaction with PCNA releases DNTT and H2A/H2B histones from this ternary complex. Interacts with ESR1, ESR2, PPARG and RXRA. Part of the small subunit (SSU) processome, composed of more than 70 proteins and the RNA chaperone small nucleolar RNA (snoRNA) U3. Widely expressed with higher levels in testis.

The protein resides in the nucleus. Its subcellular location is the nucleolus. Regulates the transcriptional activity of DNTT and ESR1. May function as a chromatin remodeling protein. Part of the small subunit (SSU) processome, first precursor of the small eukaryotic ribosomal subunit. During the assembly of the SSU processome in the nucleolus, many ribosome biogenesis factors, an RNA chaperone and ribosomal proteins associate with the nascent pre-rRNA and work in concert to generate RNA folding, modifications, rearrangements and cleavage as well as targeted degradation of pre-ribosomal RNA by the RNA exosome. This is Deoxynucleotidyltransferase terminal-interacting protein 2 from Homo sapiens (Human).